A 566-amino-acid polypeptide reads, in one-letter code: Malate synthase, glyoxysomal (566 aa).

Arginine 182 (proton acceptor) is an active-site residue. Aspartate 467 functions as the Proton donor in the catalytic mechanism. The short motif at serine 564 to leucine 566 is the Microbody targeting signal element.

It belongs to the malate synthase family.

It is found in the glyoxysome. It carries out the reaction glyoxylate + acetyl-CoA + H2O = (S)-malate + CoA + H(+). It functions in the pathway carbohydrate metabolism; glyoxylate cycle; (S)-malate from isocitrate: step 2/2. The chain is Malate synthase, glyoxysomal from Cucurbita maxima (Pumpkin).